The sequence spans 468 residues: RUS family member 1 (468 aa).

At A2 the chain carries N-acetylalanine. At T49 the chain carries Phosphothreonine. The chain crosses the membrane as a helical span at residues 247-267 (LLMLPLVSGCPGFSLGCFFFL).

It belongs to the RUS1 family.

It is found in the membrane. The polypeptide is RUS family member 1 (Homo sapiens (Human)).